The following is a 139-amino-acid chain: Small integral membrane protein 34 (139 aa).

The chain crosses the membrane as a helical span at residues 46 to 66 (GTSAAWYILTIIGIYAVIFVF).

The protein localises to the membrane. This Homo sapiens (Human) protein is Small integral membrane protein 34.